Reading from the N-terminus, the 405-residue chain is Eukaryotic initiation factor 4A (405 aa).

Positions 31–59 (ECFEALNLEGDLLRGIFAYGFEKPSAIQQ) match the Q motif motif. Residues 62-232 (IKPILDGYDT…TQFMRDPKRI (171 aa)) form the Helicase ATP-binding domain. Residue 75 to 82 (AQSGTGKT) participates in ATP binding. The DEAD box signature appears at 180–183 (DEAD). Residues 243-404 (GIRQFYVGVE…EMPMGITDIL (162 aa)) enclose the Helicase C-terminal domain.

This sequence belongs to the DEAD box helicase family. eIF4A subfamily. In terms of assembly, eIF4F is a multi-subunit complex, the composition of which varies with external and internal environmental conditions. It is composed of at least EIF4A, EIF4E and EIF4G.

It carries out the reaction ATP + H2O = ADP + phosphate + H(+). In terms of biological role, ATP-dependent RNA helicase which is a subunit of the eIF4F complex involved in cap recognition and is required for mRNA binding to ribosome. In the current model of translation initiation, eIF4A unwinds RNA secondary structures in the 5'-UTR of mRNAs which is necessary to allow efficient binding of the small ribosomal subunit, and subsequent scanning for the initiator codon. This chain is Eukaryotic initiation factor 4A (EIF4-A), found in Cryptosporidium parvum.